Reading from the N-terminus, the 2894-residue chain is Bifunctional DNA-directed RNA polymerase subunit beta-beta' (2894 aa).

The segment at 1–1378 is DNA-directed RNA polymerase subunit beta; it reads MANFTKLKNR…DVNIYGDEQD (1378 aa). Residues 1385–2894 are DNA-directed RNA polymerase subunit beta'; that stretch reads PIAIKEDERP…QEEYEEDEEE (1510 aa). Zn(2+) contacts are provided by C1450, C1452, C1465, and C1468. The Mg(2+) site is built by D1849, D1851, and D1853. Zn(2+)-binding residues include C2179, C2253, C2260, and C2263.

The protein in the N-terminal section; belongs to the RNA polymerase beta chain family. This sequence in the C-terminal section; belongs to the RNA polymerase beta' chain family. The RNAP catalytic core consists of 2 alpha, 1 beta/beta' and 1 omega subunit. When a sigma factor is associated with the core the holoenzyme is formed, which can initiate transcription. Mg(2+) serves as cofactor. Requires Zn(2+) as cofactor.

It catalyses the reaction RNA(n) + a ribonucleoside 5'-triphosphate = RNA(n+1) + diphosphate. Functionally, DNA-dependent RNA polymerase catalyzes the transcription of DNA into RNA using the four ribonucleoside triphosphates as substrates. The sequence is that of Bifunctional DNA-directed RNA polymerase subunit beta-beta' (rpoBC) from Helicobacter hepaticus (strain ATCC 51449 / 3B1).